Here is a 363-residue protein sequence, read N- to C-terminus: Dioxygenase sphC (363 aa).

Fe cation is bound by residues H183, D185, and H259.

It belongs to the PhyH family. Homodimer. It depends on Fe cation as a cofactor.

It carries out the reaction sphingofungin B1 + 2-oxoglutarate + O2 = sphingofungin B + succinate + CO2. Its pathway is secondary metabolite biosynthesis. Functionally, dioxygenase; part of the gene cluster that mediates the biosynthesis of sphingofungins, bioactive molecules acting as sphingolipid inhibitors via inhibiting serine palmitoyl transferase (SPT). Within the pathway, sphC catalyzes the hydrolxylation at C-4 to convert sphingofungin B1 into sphingofungin B as well as presphingofungin into sphingofungin B2. Sphingofungin biosynthesis starts with the PKS sphB that produces an C18 polyketide precursor 3-hydroxyoctadeca-4,10-dienoyl-ACP containing one delta-6 desaturation and one delta-12 desaturation. The aminoacyl transferase sphA uses the sphB product to produce 3-keto-presphingofungin by adding an aminomalonate molecule. SphF then reduces the C-3 ketone of 3-keto-presphingofungin which leads to presphingofungin. The cytochrome P450 monooxygenase sphH converts presphingofungin into sphingofungin B1 which is further converted to sphingofungin B by the dioxygenase sphC. SphC is also able to convert presphingofungin into sphingofungin B2. The acetyltransferase sphE acetylates sphingofungin B to produce sphingofungin C, but can also convert sphingofungin B1 into sphingofungin C1 and sphingofungin B2 into sphingofungin C2. Finally, sphingofungin C can be spontaneously converted into sphingofungin D. In Aspergillus fumigatus (strain CBS 144.89 / FGSC A1163 / CEA10) (Neosartorya fumigata), this protein is Dioxygenase sphC.